The sequence spans 92 residues: UPF0223 protein Sez_0908 (92 aa).

This sequence belongs to the UPF0223 family.

The chain is UPF0223 protein Sez_0908 from Streptococcus equi subsp. zooepidemicus (strain MGCS10565).